Consider the following 126-residue polypeptide: Muscarinic acetylcholine receptor M4 (126 aa).

The disordered stretch occupies residues 1–90 (MKQSVKKPPP…LQPRTLNPAS (90 aa)). Topologically, residues 1–126 (MKQSVKKPPP…PAGMRPAANV (126 aa)) are cytoplasmic. Pro residues predominate over residues 28 to 39 (APPPVLPPPPRP). Over residues 47–57 (NESSSGSATQN) the composition is skewed to polar residues. Positions 64-75 (TELSTTEATTPA) are enriched in low complexity.

This sequence belongs to the G-protein coupled receptor 1 family. Muscarinic acetylcholine receptor subfamily. CHRM4 sub-subfamily.

It is found in the cell membrane. It localises to the postsynaptic cell membrane. The muscarinic acetylcholine receptor mediates various cellular responses, including inhibition of adenylate cyclase, breakdown of phosphoinositides and modulation of potassium channels through the action of G proteins. Primary transducing effect is inhibition of adenylate cyclase. May couple to multiple functional responses in cell lines. The polypeptide is Muscarinic acetylcholine receptor M4 (CHRM4) (Bos taurus (Bovine)).